We begin with the raw amino-acid sequence, 210 residues long: Protein-methionine-sulfoxide reductase heme-binding subunit MsrQ (210 aa).

Transmembrane regions (helical) follow at residues 8-28 (LAVF…AWIF), 37-57 (VLVE…MSMT), 75-95 (LGLW…LFIL), 110-130 (PYII…VTSN), 147-167 (LIYV…RADL), and 169-189 (EWAL…PMIT).

The protein belongs to the MsrQ family. In terms of assembly, heterodimer of a catalytic subunit (MsrP) and a heme-binding subunit (MsrQ). The cofactor is FMN. Heme b is required as a cofactor.

It localises to the cell inner membrane. In terms of biological role, part of the MsrPQ system that repairs oxidized periplasmic proteins containing methionine sulfoxide residues (Met-O), using respiratory chain electrons. Thus protects these proteins from oxidative-stress damage caused by reactive species of oxygen and chlorine generated by the host defense mechanisms. MsrPQ is essential for the maintenance of envelope integrity under bleach stress, rescuing a wide series of structurally unrelated periplasmic proteins from methionine oxidation. MsrQ provides electrons for reduction to the reductase catalytic subunit MsrP, using the quinone pool of the respiratory chain. This is Protein-methionine-sulfoxide reductase heme-binding subunit MsrQ from Pseudomonas savastanoi pv. phaseolicola (strain 1448A / Race 6) (Pseudomonas syringae pv. phaseolicola (strain 1448A / Race 6)).